Reading from the N-terminus, the 402-residue chain is Dihydrolipoyllysine-residue acetyltransferase component of pyruvate dehydrogenase complex (402 aa).

In terms of domain architecture, Lipoyl-binding spans 2-77 (ANEFKFTDVG…HIGQVMAVID (76 aa)). K43 is modified (N6-lipoyllysine). Disordered stretches follow at residues 82-110 (AAAP…APVT) and 143-172 (PQPT…PSGE). Pro residues-rich tracts occupy residues 87–107 (APQP…PTPA) and 143–162 (PQPT…PTPA). The active site involves H374.

The protein belongs to the 2-oxoacid dehydrogenase family. As to quaternary structure, forms a 24-polypeptide structural core with octahedral symmetry. Requires (R)-lipoate as cofactor.

It carries out the reaction N(6)-[(R)-dihydrolipoyl]-L-lysyl-[protein] + acetyl-CoA = N(6)-[(R)-S(8)-acetyldihydrolipoyl]-L-lysyl-[protein] + CoA. Its function is as follows. The pyruvate dehydrogenase complex catalyzes the overall conversion of pyruvate to acetyl-CoA and CO(2). It contains multiple copies of three enzymatic components: pyruvate dehydrogenase (E1), dihydrolipoamide acetyltransferase (E2) and lipoamide dehydrogenase (E3). The protein is Dihydrolipoyllysine-residue acetyltransferase component of pyruvate dehydrogenase complex (pdhC) of Mycoplasma pneumoniae (strain ATCC 29342 / M129 / Subtype 1) (Mycoplasmoides pneumoniae).